A 170-amino-acid polypeptide reads, in one-letter code: Protein BTG1 (170 aa).

It belongs to the BTG family.

Its function is as follows. Anti-proliferative protein. This is Protein BTG1 (BTG1) from Gallus gallus (Chicken).